A 326-amino-acid polypeptide reads, in one-letter code: Aquaporin-4 (326 aa).

Topologically, residues 1–39 are cytoplasmic; it reads MSDGAGAAARRWGKCGGRSCSRESIMVAFKGVWTQAFWK. S-palmitoyl cysteine attachment occurs at residues Cys-15 and Cys-20. Residues 40–60 form a helical membrane-spanning segment; that stretch reads AVTAEFLAMLIFVLLSVGSTI. Over 61–72 the chain is Extracellular; sequence NWGGSENPLPVD. Residues 73–92 traverse the membrane as a helical segment; sequence MVLISLCFGLSIATMVQCFG. Residues 93-96 are Cytoplasmic-facing; the sequence is HISG. An intramembrane region (discontinuously helical) is located at residues 97–104; the sequence is GHINPAVT. Residues 100-102 carry the NPA 1 motif; sequence NPA. Residues 105 to 118 lie on the Cytoplasmic side of the membrane; sequence VAMVCTRKISIAKS. Residue Ser-114 is modified to Phosphoserine; by PKG. Residues 119–139 form a helical membrane-spanning segment; that stretch reads VFYITAQCLGAIIGAGILYLV. The Extracellular portion of the chain corresponds to 140-158; that stretch reads TPPNVVGGLGVTTVHGNLT. N-linked (GlcNAc...) asparagine glycosylation is present at Asn-156. The chain crosses the membrane as a helical span at residues 159–179; the sequence is AGHGLLVELIITFQLVFTIFA. The Cytoplasmic portion of the chain corresponds to 180 to 187; the sequence is SCDSKRTD. Position 183 is a phosphoserine; by PKC (Ser-183). Residues 188–208 traverse the membrane as a helical segment; it reads VTGSIALAIGFSVAIGHLFAI. Asn-209 carries N-linked (GlcNAc...) asparagine glycosylation. Residues 209–211 are Extracellular-facing; the sequence is NYT. The segment at residues 212–225 is an intramembrane region (discontinuously helical); the sequence is GASMNPARSFGPAV. The NPA 2 signature appears at 216 to 218; it reads NPA. Topologically, residues 226-234 are extracellular; that stretch reads IMGNWENHW. A helical transmembrane segment spans residues 235–255; it reads IYWVGPIIGAVLAGALYEYVF. At 256 to 326 the chain is on the cytoplasmic side; the sequence is CPDVELKRRL…DSAGEVLSSV (71 aa). Ser-279 and Ser-288 each carry phosphoserine. The residue at position 292 (Thr-292) is a Phosphothreonine. Ser-324 bears the Phosphoserine mark.

The protein belongs to the MIP/aquaporin (TC 1.A.8) family. Homotetramer. The tetramers can form oligomeric arrays in membranes. The size of the oligomers differs between tissues and is smaller in skeletal muscle than in brain. Interaction between AQP4 oligomeric arrays in close-by cells can contribute to cell-cell adhesion. Part of a complex containing MLC1, TRPV4, HEPACAM and ATP1B1. Post-translationally, phosphorylation by PKC at Ser-183 reduces conductance by 50%. Phosphorylation by PKG at Ser-114 in response to glutamate increases conductance by 40%. Isoform Long: Palmitoylated on its N-terminal region.

It is found in the cell membrane. Its subcellular location is the basolateral cell membrane. The protein localises to the endosome membrane. It localises to the sarcolemma. The protein resides in the cell projection. The enzyme catalyses H2O(in) = H2O(out). Its function is as follows. Forms a water-specific channel. Plays an important role in brain water homeostasis and in glymphatic solute transport. Required for a normal rate of water exchange across the blood brain interface. Required for normal levels of cerebrospinal fluid influx into the brain cortex and parenchyma along paravascular spaces that surround penetrating arteries, and for normal drainage of interstitial fluid along paravenous drainage pathways. Thereby, it is required for normal clearance of solutes from the brain interstitial fluid, including soluble beta-amyloid peptides derived from APP. Plays a redundant role in urinary water homeostasis and urinary concentrating ability. The protein is Aquaporin-4 (AQP4) of Notomys alexis (Spinifex hopping mouse).